Reading from the N-terminus, the 230-residue chain is Ureidoacrylate amidohydrolase RutB (230 aa).

Aspartate 24 serves as the catalytic Proton acceptor. The active site involves lysine 133. The active-site Nucleophile is the cysteine 166.

It belongs to the isochorismatase family. RutB subfamily.

The catalysed reaction is (Z)-3-ureidoacrylate + H2O + H(+) = (Z)-3-aminoacrylate + NH4(+) + CO2. It catalyses the reaction (Z)-3-ureidoacrylate + H2O = (Z)-3-aminoacrylate + carbamate + H(+). It carries out the reaction (Z)-2-methylureidoacrylate + H2O + H(+) = (Z)-2-methylaminoacrylate + NH4(+) + CO2. Its function is as follows. Hydrolyzes ureidoacrylate to form aminoacrylate and carbamate. The carbamate hydrolyzes spontaneously, thereby releasing one of the nitrogen atoms of the pyrimidine ring as ammonia and one of its carbon atoms as CO2. The sequence is that of Ureidoacrylate amidohydrolase RutB from Escherichia coli O127:H6 (strain E2348/69 / EPEC).